Reading from the N-terminus, the 145-residue chain is D-aminoacyl-tRNA deacylase (145 aa).

The Gly-cisPro motif, important for rejection of L-amino acids motif lies at 137 to 138 (GP).

The protein belongs to the DTD family. Homodimer.

The protein localises to the cytoplasm. It carries out the reaction glycyl-tRNA(Ala) + H2O = tRNA(Ala) + glycine + H(+). The catalysed reaction is a D-aminoacyl-tRNA + H2O = a tRNA + a D-alpha-amino acid + H(+). Functionally, an aminoacyl-tRNA editing enzyme that deacylates mischarged D-aminoacyl-tRNAs. Also deacylates mischarged glycyl-tRNA(Ala), protecting cells against glycine mischarging by AlaRS. Acts via tRNA-based rather than protein-based catalysis; rejects L-amino acids rather than detecting D-amino acids in the active site. By recycling D-aminoacyl-tRNA to D-amino acids and free tRNA molecules, this enzyme counteracts the toxicity associated with the formation of D-aminoacyl-tRNA entities in vivo and helps enforce protein L-homochirality. In Pectobacterium carotovorum subsp. carotovorum (strain PC1), this protein is D-aminoacyl-tRNA deacylase.